The chain runs to 401 residues: Jumonji C domain-containing protein 5 (401 aa).

The JmjC domain maps to 255–401 (EYLAQHELFA…PSFSVSFWWE (147 aa)). Residues histidine 306, aspartate 308, and histidine 385 each coordinate Fe cation.

Fe(2+) is required as a cofactor. Expressed in neurons close to the dorsal lateral neurons involved in circadian rhythm.

It is found in the nucleus. It localises to the nucleoplasm. The protein resides in the cytoplasm. It carries out the reaction L-arginyl-[protein] + 2-oxoglutarate + O2 = (3R)-3-hydroxy-L-arginyl-[protein] + succinate + CO2. In terms of biological role, bifunctional enzyme that acts both as an endopeptidase and 2-oxoglutarate-dependent monooxygenase. May be involved in regulation of behavior and circadian rhythms. The protein is Jumonji C domain-containing protein 5 of Drosophila melanogaster (Fruit fly).